The sequence spans 372 residues: Glutamate 5-kinase (372 aa).

Lysine 14 serves as a coordination point for ATP. The substrate site is built by serine 54, aspartate 141, and asparagine 153. ATP is bound by residues threonine 173 to aspartate 174 and threonine 215 to lysine 221. One can recognise a PUA domain in the interval arginine 280–aspartate 358.

It belongs to the glutamate 5-kinase family.

The protein resides in the cytoplasm. It carries out the reaction L-glutamate + ATP = L-glutamyl 5-phosphate + ADP. Its pathway is amino-acid biosynthesis; L-proline biosynthesis; L-glutamate 5-semialdehyde from L-glutamate: step 1/2. Its function is as follows. Catalyzes the transfer of a phosphate group to glutamate to form L-glutamate 5-phosphate. The sequence is that of Glutamate 5-kinase from Shewanella sediminis (strain HAW-EB3).